The chain runs to 133 residues: S-adenosylmethionine decarboxylase proenzyme (133 aa).

Residue Ser64 is the Schiff-base intermediate with substrate; via pyruvic acid of the active site. A Pyruvic acid (Ser); by autocatalysis modification is found at Ser64. His69 functions as the Proton acceptor; for processing activity in the catalytic mechanism. The active-site Proton donor; for catalytic activity is the Cys84.

This sequence belongs to the prokaryotic AdoMetDC family. Type 1 subfamily. As to quaternary structure, heterotetramer of two alpha and two beta chains arranged as a dimer of alpha/beta heterodimers. Pyruvate is required as a cofactor. Is synthesized initially as an inactive proenzyme. Formation of the active enzyme involves a self-maturation process in which the active site pyruvoyl group is generated from an internal serine residue via an autocatalytic post-translational modification. Two non-identical subunits are generated from the proenzyme in this reaction, and the pyruvate is formed at the N-terminus of the alpha chain, which is derived from the carboxyl end of the proenzyme. The post-translation cleavage follows an unusual pathway, termed non-hydrolytic serinolysis, in which the side chain hydroxyl group of the serine supplies its oxygen atom to form the C-terminus of the beta chain, while the remainder of the serine residue undergoes an oxidative deamination to produce ammonia and the pyruvoyl group blocking the N-terminus of the alpha chain.

The catalysed reaction is S-adenosyl-L-methionine + H(+) = S-adenosyl 3-(methylsulfanyl)propylamine + CO2. It functions in the pathway amine and polyamine biosynthesis; S-adenosylmethioninamine biosynthesis; S-adenosylmethioninamine from S-adenosyl-L-methionine: step 1/1. Functionally, catalyzes the decarboxylation of S-adenosylmethionine to S-adenosylmethioninamine (dcAdoMet), the propylamine donor required for the synthesis of the polyamines spermine and spermidine from the diamine putrescine. The protein is S-adenosylmethionine decarboxylase proenzyme of Persephonella marina (strain DSM 14350 / EX-H1).